A 157-amino-acid chain; its full sequence is Large ribosomal subunit protein uL11 (157 aa).

Disordered stretches follow at residues 1 to 28 (MAGT…GPTP) and 138 to 157 (NNPR…DILK). Basic and acidic residues predominate over residues 139-157 (NPREFKSRMEDGEYDDILK).

This sequence belongs to the universal ribosomal protein uL11 family. Part of the ribosomal stalk of the 50S ribosomal subunit. Interacts with L10 and the large rRNA to form the base of the stalk. L10 forms an elongated spine to which L12 dimers bind in a sequential fashion forming a multimeric L10(L12)X complex.

Its function is as follows. Forms part of the ribosomal stalk which helps the ribosome interact with GTP-bound translation factors. This chain is Large ribosomal subunit protein uL11, found in Haloquadratum walsbyi (strain DSM 16790 / HBSQ001).